The following is a 572-amino-acid chain: 2-hydroxyacyl-CoA lyase (572 aa).

N-acetylalanine is present on Ala-2. Thiamine diphosphate is bound at residue Glu-58. A thiamine pyrophosphate binding region spans residues 407-488; it reads TMDVGRSVLV…IIVFNNGGVY (82 aa). Residues Asp-457 and Asn-484 each contribute to the Mg(2+) site.

Belongs to the TPP enzyme family. Homotetramer. Requires Mg(2+) as cofactor. Thiamine diphosphate serves as cofactor.

It carries out the reaction an (R)-2-hydroxy-long-chain-fatty acyl-CoA = a long-chain fatty aldehyde + formyl-CoA. It catalyses the reaction a 2-hydroxy-3-methyl fatty acyl-CoA = a 2-methyl-branched fatty aldehyde + formyl-CoA. Catalyzes a carbon-carbon cleavage reaction; cleaves a 2-hydroxy-3-methylacyl-CoA into formyl-CoA and a 2-methyl-branched fatty aldehyde. This is 2-hydroxyacyl-CoA lyase (HACL) from Arabidopsis thaliana (Mouse-ear cress).